The sequence spans 402 residues: MAQDRKKVLVLGAGYAGLQTVTKLQKELSADEADITLINKNKYHYEATWLHEASAGTLNYEDLIYPIESVIKEDKVKFINAEVTKIDRNAKKVETNHGIYDYDILVVALGFESETFGINGMKDYAFQIENIETARKLSRHIEDKFANYAASKEKDDKDLAILVGGAGFTGIEFLGELTERIPELCNKYGVDQNKVRVTCVEAAPKMLPMFSDELVNYAVNYLEDRGVEFKIATPIVACNEKGFVVKINDQEQQLEAGTAIWAAGVRGSKLMEESFEGVKRGRIVTKQDLTIEGHDDIFVIGDVSAFIPAGEERPLPTTAQIAMQQGEHVAKSIKNILNGQAATDFEYVDRGTVCSLGAHDGVGIVYGRDITGKKAAFMKKVIDTRAVFKIGGVGLAFKKGKF.

Residues 12-16, 39-40, and V83 contribute to the FAD site; these read GAGYA and NK. Residue E172 is part of the active site. Residues D302, 319-320, and K379 each bind FAD; that span reads AQ.

It belongs to the NADH dehydrogenase family. It depends on FAD as a cofactor.

The protein resides in the cell membrane. The enzyme catalyses a quinone + NADH + H(+) = a quinol + NAD(+). Alternative, nonproton pumping NADH:quinone oxidoreductase that delivers electrons to the respiratory chain by oxidation of NADH and reduction of quinones, and contributes to the regeneration of NAD(+). The chain is Type II NADH:quinone oxidoreductase from Staphylococcus haemolyticus (strain JCSC1435).